Reading from the N-terminus, the 181-residue chain is Large ribosomal subunit protein uL5 (181 aa).

This sequence belongs to the universal ribosomal protein uL5 family. Part of the 50S ribosomal subunit; part of the 5S rRNA/L5/L18/L25 subcomplex. Contacts the 5S rRNA and the P site tRNA. Forms a bridge to the 30S subunit in the 70S ribosome.

In terms of biological role, this is one of the proteins that bind and probably mediate the attachment of the 5S RNA into the large ribosomal subunit, where it forms part of the central protuberance. In the 70S ribosome it contacts protein S13 of the 30S subunit (bridge B1b), connecting the 2 subunits; this bridge is implicated in subunit movement. Contacts the P site tRNA; the 5S rRNA and some of its associated proteins might help stabilize positioning of ribosome-bound tRNAs. The polypeptide is Large ribosomal subunit protein uL5 (Acaryochloris marina (strain MBIC 11017)).